Reading from the N-terminus, the 150-residue chain is Ribosome-binding factor A (150 aa).

The interval 131 to 150 (LSHDDDEDGGADEAPRNGDE) is disordered.

This sequence belongs to the RbfA family. Monomer. Binds 30S ribosomal subunits, but not 50S ribosomal subunits or 70S ribosomes.

It is found in the cytoplasm. In terms of biological role, one of several proteins that assist in the late maturation steps of the functional core of the 30S ribosomal subunit. Associates with free 30S ribosomal subunits (but not with 30S subunits that are part of 70S ribosomes or polysomes). Required for efficient processing of 16S rRNA. May interact with the 5'-terminal helix region of 16S rRNA. This Brucella melitensis biotype 2 (strain ATCC 23457) protein is Ribosome-binding factor A.